A 492-amino-acid polypeptide reads, in one-letter code: MO25-like protein 3 (492 aa).

The tract at residues 442–492 is disordered; the sequence is SRAGIRFGETRNVKGSPRSRSQSPRPPTGPEPSPRTTSYQNVRFPPEDSSR. Positions 465–474 are enriched in pro residues; it reads PRPPTGPEPS.

This sequence belongs to the Mo25 family.

The chain is MO25-like protein 3 from Caenorhabditis briggsae.